The sequence spans 183 residues: Small ribosomal subunit protein uS4c (183 aa).

Residues 82–143 enclose the S4 RNA-binding domain; it reads MRLDNILFRL…KQRSKALIQN (62 aa).

The protein belongs to the universal ribosomal protein uS4 family. In terms of assembly, part of the 30S ribosomal subunit. Contacts protein S5. The interaction surface between S4 and S5 is involved in control of translational fidelity.

It is found in the plastid. Its subcellular location is the chloroplast. One of the primary rRNA binding proteins, it binds directly to 16S rRNA where it nucleates assembly of the body of the 30S subunit. Functionally, with S5 and S12 plays an important role in translational accuracy. This Sparaxis sp. (strain Lejeune 1997) protein is Small ribosomal subunit protein uS4c (rps4).